The following is a 116-amino-acid chain: Ribosome-binding factor A (116 aa).

The protein belongs to the RbfA family. Monomer. Binds 30S ribosomal subunits, but not 50S ribosomal subunits or 70S ribosomes.

The protein resides in the cytoplasm. In terms of biological role, one of several proteins that assist in the late maturation steps of the functional core of the 30S ribosomal subunit. Associates with free 30S ribosomal subunits (but not with 30S subunits that are part of 70S ribosomes or polysomes). Required for efficient processing of 16S rRNA. May interact with the 5'-terminal helix region of 16S rRNA. The sequence is that of Ribosome-binding factor A from Streptococcus mutans serotype c (strain ATCC 700610 / UA159).